A 352-amino-acid chain; its full sequence is Phosphoribosylformylglycinamidine cyclo-ligase (352 aa).

The protein belongs to the AIR synthase family.

Its subcellular location is the cytoplasm. It catalyses the reaction 2-formamido-N(1)-(5-O-phospho-beta-D-ribosyl)acetamidine + ATP = 5-amino-1-(5-phospho-beta-D-ribosyl)imidazole + ADP + phosphate + H(+). The protein operates within purine metabolism; IMP biosynthesis via de novo pathway; 5-amino-1-(5-phospho-D-ribosyl)imidazole from N(2)-formyl-N(1)-(5-phospho-D-ribosyl)glycinamide: step 2/2. The chain is Phosphoribosylformylglycinamidine cyclo-ligase from Ectopseudomonas mendocina (strain ymp) (Pseudomonas mendocina).